We begin with the raw amino-acid sequence, 346 residues long: Serpentine receptor class gamma-20 (346 aa).

7 helical membrane-spanning segments follow: residues 27-47, 69-89, 106-128, 157-177, 212-232, 254-274, and 279-299; these read VMLS…SAVL, FFVL…IEVL, PFFF…CLAF, ILAP…WNIL, IPCL…LTML, TMLF…LPGI, and LLIS…ALIL.

Belongs to the nematode receptor-like protein srg family.

The protein localises to the membrane. This chain is Serpentine receptor class gamma-20 (srg-20), found in Caenorhabditis elegans.